Consider the following 358-residue polypeptide: 3-dehydroquinate synthase (358 aa).

NAD(+) contacts are provided by residues 70–75 (DGEQYK), 104–108 (GVVGD), 128–129 (TT), K141, K150, and 168–171 (CLNT). 3 residues coordinate Zn(2+): E183, H246, and H263.

This sequence belongs to the sugar phosphate cyclases superfamily. Dehydroquinate synthase family. Co(2+) is required as a cofactor. Zn(2+) serves as cofactor. It depends on NAD(+) as a cofactor.

It is found in the cytoplasm. The enzyme catalyses 7-phospho-2-dehydro-3-deoxy-D-arabino-heptonate = 3-dehydroquinate + phosphate. Its pathway is metabolic intermediate biosynthesis; chorismate biosynthesis; chorismate from D-erythrose 4-phosphate and phosphoenolpyruvate: step 2/7. Catalyzes the conversion of 3-deoxy-D-arabino-heptulosonate 7-phosphate (DAHP) to dehydroquinate (DHQ). This is 3-dehydroquinate synthase from Shewanella sediminis (strain HAW-EB3).